A 534-amino-acid chain; its full sequence is Glycolytic genes transcriptional activator GCR2 (534 aa).

The disordered stretch occupies residues 29-122 (LQSVTNSPQT…TGNNASSSAT (94 aa)). The span at 30 to 43 (QSVTNSPQTTTNTP) shows a compositional bias: low complexity. The segment covering 64–88 (SDSTPNIDEIITSTGSNALTKTNSD) has biased composition (polar residues). Positions 89–122 (SANGTPNGNSSSTSAISNASNPATTGNNASSSAT) are enriched in low complexity. Ser151 is subject to Phosphoserine. The segment at 230 to 333 (LTQGRRKGNS…SNPGTNMLFD (104 aa)) is disordered. The segment covering 238 to 252 (NSLNTSTKGSPSDLQ) has biased composition (polar residues). The segment covering 253–279 (GINNGNNNGNNGNIGNGSNIKNYGNKN) has biased composition (low complexity). Positions 281 to 288 (PNNRTKKR) match the Nuclear localization signal motif. Positions 295–304 (NAKNGKNNKN) are enriched in low complexity. Positions 312-328 (ITDTSAFSNTTISNPGT) are enriched in polar residues. Phosphoserine occurs at positions 406 and 409. The interval 497–534 (IVQLERELELQRQETQWLRKMLIEDMGCVRSMLRDLQR) is leucine-zipper.

In terms of assembly, homodimer via the leucine-zipper domain. Forms a complex with a GCR1 homodimer.

The protein localises to the nucleus. Its function is as follows. Transcriptional activator required for the expression of glycolytic genes. Enhances the CT box-dependent transcriptional activation of a RAP1-GCR1 complex. Required for GCR1 phosphorylation. This is Glycolytic genes transcriptional activator GCR2 (GCR2) from Saccharomyces cerevisiae (strain ATCC 204508 / S288c) (Baker's yeast).